The primary structure comprises 132 residues: Protein NrdI (132 aa).

The protein belongs to the NrdI family.

Functionally, probably involved in ribonucleotide reductase function. The protein is Protein NrdI of Staphylococcus aureus (strain Mu3 / ATCC 700698).